Reading from the N-terminus, the 148-residue chain is UPF0756 membrane protein ETA_17460 (148 aa).

Helical transmembrane passes span 14 to 34 (ALSYFSHNITVTIALLVLIVI), 51 to 71 (MTVGIIILTIGVMAPIASGTI), 80 to 100 (FLHWKSLTAIAIGIFVSWLGG), and 112 to 132 (VVGGLLIGTIIGVSLFRGVPV).

Belongs to the UPF0756 family.

The protein resides in the cell membrane. This is UPF0756 membrane protein ETA_17460 from Erwinia tasmaniensis (strain DSM 17950 / CFBP 7177 / CIP 109463 / NCPPB 4357 / Et1/99).